The sequence spans 116 residues: Staphylococcal complement inhibitor (116 aa).

An N-terminal signal peptide occupies residues 1–31 (MKIRKSILAGTLAIVLASPLVTNLDKNEAQA). Positions 62–79 (LATGSLNTYYKRTIKISG) are essential for activity.

Belongs to the SCIN family.

It is found in the secreted. Its function is as follows. Involved in countering the first line of host defense mechanisms. Efficiently inhibits opsonization, phagocytosis and killing of S.aureus by human neutrophils. Acts by binding and stabilizing human C3 convertases (C4b2a and C3bBb), leading to their inactivation. The convertases are no longer able to cleave complement C3, therefore preventing further C3b deposition on the bacterial surface and phagocytosis of the bacterium. Also prevents C5a-induced neutrophil responses. The chain is Staphylococcal complement inhibitor (scn) from Staphylococcus aureus (strain Mu50 / ATCC 700699).